Here is a 223-residue protein sequence, read N- to C-terminus: Putative 3-methyladenine DNA glycosylase (223 aa).

It belongs to the DNA glycosylase MPG family.

The polypeptide is Putative 3-methyladenine DNA glycosylase (Rhodococcus jostii (strain RHA1)).